The chain runs to 46 residues: Photosystem II reaction center protein K (46 aa).

Residues 1 to 9 (MESILMIFA) constitute a propeptide that is removed on maturation. Residues 25 to 45 (LPVIPVLFLLLAFVWQAAVSF) traverse the membrane as a helical segment.

It belongs to the PsbK family. In terms of assembly, PSII is composed of 1 copy each of membrane proteins PsbA, PsbB, PsbC, PsbD, PsbE, PsbF, PsbH, PsbI, PsbJ, PsbK, PsbL, PsbM, PsbT, PsbX, PsbY, PsbZ, Psb30/Ycf12, at least 3 peripheral proteins of the oxygen-evolving complex and a large number of cofactors. It forms dimeric complexes.

It localises to the plastid. It is found in the chloroplast thylakoid membrane. Its function is as follows. One of the components of the core complex of photosystem II (PSII). PSII is a light-driven water:plastoquinone oxidoreductase that uses light energy to abstract electrons from H(2)O, generating O(2) and a proton gradient subsequently used for ATP formation. It consists of a core antenna complex that captures photons, and an electron transfer chain that converts photonic excitation into a charge separation. The polypeptide is Photosystem II reaction center protein K (Stigeoclonium helveticum (Green alga)).